A 381-amino-acid polypeptide reads, in one-letter code: Prostatic acid phosphatase (381 aa).

The N-terminal stretch at 1–31 (MRAVPLHLVGTASLTLGFLLLLSLRLDPGQA) is a signal peptide. Residue Arg-42 participates in substrate binding. The active-site Nucleophile is His-43. Arg-46 serves as a coordination point for substrate. A glycan (N-linked (GlcNAc...) asparagine) is linked at Asn-93. A substrate-binding site is contributed by Arg-110. 3 disulfide bridges follow: Cys-160/Cys-371, Cys-214/Cys-312, and Cys-346/Cys-350. A glycan (N-linked (GlcNAc...) asparagine) is linked at Asn-219. Residue His-288 coordinates substrate. Asp-289 (proton donor) is an active-site residue. An N-linked (GlcNAc...) asparagine glycan is attached at Asn-332.

The protein belongs to the histidine acid phosphatase family. As to quaternary structure, homodimer; dimer formation is required for phosphatase activity. N-glycosylated. As to expression, expressed in prostate epithelium. Also expressed in the pelvic nerve and sacral spinal cord. Localizes in peptidergic and non-peptidergic nociceptive (pain-sensing) neurons.

It localises to the secreted. The protein localises to the cell membrane. The protein resides in the lysosome membrane. It catalyses the reaction a phosphate monoester + H2O = an alcohol + phosphate. The catalysed reaction is a ribonucleoside 5'-phosphate + H2O = a ribonucleoside + phosphate. It carries out the reaction 1-(9Z-octadecenoyl)-sn-glycero-3-phosphate + H2O = 1-(9Z-octadecenoyl)-sn-glycerol + phosphate. The enzyme catalyses O-phospho-L-tyrosyl-[protein] + H2O = L-tyrosyl-[protein] + phosphate. Inhibited by L(+)-tartrate. In terms of biological role, a non-specific tyrosine phosphatase that dephosphorylates a diverse number of substrates under acidic conditions (pH 4-6) including alkyl, aryl, and acyl orthophosphate monoesters and phosphorylated proteins. Has lipid phosphatase activity and inactivates lysophosphatidic acid in seminal plasma. In addition to its tyrosine phosphatase activity, also has ecto-5'-nucleotidase activity in dorsal root ganglion (DRG) neurons. Generates adenosine from AMP. This extracellular adenosine leads to a decrease in chronic pain by activating A1R in nociceptive neurons. This Rattus norvegicus (Rat) protein is Prostatic acid phosphatase (Acp3).